The following is a 277-amino-acid chain: MALKNFKPTSDGKRHQVAINYSELSNEGPERSLLAPLKRTGGRNNNGRMTVRHQGGGHKRRYRIIDFKRNKFDVPAKVARIEYDPNRTAFIALLHYADGEKSYILAPQRLQVGDTVVSAKTLDNVDVKPGNCMPLRVMPIGTIIHNVELKPGKGGQVARSAGNYIQLMGKEGKYAQLKMPSGEMRLVLLECMATVGMVSNPDNSNTKIGKAGRTRWMGKRPSVRGVVMNPVDHPHGGGEGRTSGGRHPVTPWGVPTKGKKTRSKTKASDRLIMRRRK.

The interval 227–277 (VMNPVDHPHGGGEGRTSGGRHPVTPWGVPTKGKKTRSKTKASDRLIMRRRK) is disordered. Positions 266-277 (KASDRLIMRRRK) are enriched in basic and acidic residues.

It belongs to the universal ribosomal protein uL2 family. As to quaternary structure, part of the 50S ribosomal subunit. Forms a bridge to the 30S subunit in the 70S ribosome.

One of the primary rRNA binding proteins. Required for association of the 30S and 50S subunits to form the 70S ribosome, for tRNA binding and peptide bond formation. It has been suggested to have peptidyltransferase activity; this is somewhat controversial. Makes several contacts with the 16S rRNA in the 70S ribosome. The sequence is that of Large ribosomal subunit protein uL2 from Magnetococcus marinus (strain ATCC BAA-1437 / JCM 17883 / MC-1).